The primary structure comprises 457 residues: Multidrug resistance protein MdtK (457 aa).

12 consecutive transmembrane segments (helical) span residues 11–31 (LLAL…MGFV), 53–73 (IWLP…PVIA), 93–113 (WLAG…GYII), 127–147 (AVGY…FQVA), 160–180 (GMVM…IFIY), 188–208 (LGGI…FIAM), 243–263 (LPIA…ALLV), 276–296 (IALN…AAVT), 314–334 (AART…IFTV), 350–370 (VVAL…SDSI), 387–407 (IFFI…YILA), and 418–438 (PAGF…LMML).

Belongs to the multi antimicrobial extrusion (MATE) (TC 2.A.66.1) family. MdtK subfamily.

It localises to the cell inner membrane. In terms of biological role, multidrug efflux pump that functions probably as a Na(+)/drug antiporter. This Salmonella newport (strain SL254) protein is Multidrug resistance protein MdtK.